We begin with the raw amino-acid sequence, 315 residues long: Isoaspartyl peptidase/L-asparaginase 1 (315 aa).

The residue at position 169 (serine 169) is a Phosphoserine. The active-site Nucleophile is threonine 183. Substrate-binding positions include 211-214 (RIGD) and 233-236 (TGKG).

This sequence belongs to the Ntn-hydrolase family. As to quaternary structure, heterotetramer of two alpha and two beta chains arranged as a dimer of alpha/beta heterodimers. In terms of processing, cleaved into an alpha and beta chain by autocatalysis; this activates the enzyme. The N-terminal residue of the beta subunit is responsible for the nucleophile hydrolase activity.

The enzyme catalyses Cleavage of a beta-linked Asp residue from the N-terminus of a polypeptide.. In terms of biological role, acts in asparagine catabolism but also in the final steps of protein and degradation via hydrolysis of a range of isoaspartyl dipeptides. The affinity for Asn and at least 4 isoaspartyl dipeptides (L-beta-Asp-Ala, L-beta-Asp-Gly, L-beta-Asp-Leu, L-beta-Asp-Phe) is quite low, KM being greater than 4.0 mM. The enzyme is inactive on alpha-aspartyl dipeptides. The protein is Isoaspartyl peptidase/L-asparaginase 1 of Arabidopsis thaliana (Mouse-ear cress).